A 370-amino-acid chain; its full sequence is Flagellar P-ring protein (370 aa).

The N-terminal stretch at 1-28 (MTFFTRCFRRGALLFLLAVLLLPSPAQA) is a signal peptide.

This sequence belongs to the FlgI family. In terms of assembly, the basal body constitutes a major portion of the flagellar organelle and consists of four rings (L,P,S, and M) mounted on a central rod.

Its subcellular location is the periplasm. The protein resides in the bacterial flagellum basal body. In terms of biological role, assembles around the rod to form the L-ring and probably protects the motor/basal body from shearing forces during rotation. The polypeptide is Flagellar P-ring protein (Oleidesulfovibrio alaskensis (strain ATCC BAA-1058 / DSM 17464 / G20) (Desulfovibrio alaskensis)).